The chain runs to 117 residues: UPF0295 protein Bsph_0336 (117 aa).

The next 2 membrane-spanning stretches (helical) occupy residues 13–33 (SFAL…IFFK) and 37–57 (ILVL…TVVY).

It belongs to the UPF0295 family.

Its subcellular location is the cell membrane. This is UPF0295 protein Bsph_0336 from Lysinibacillus sphaericus (strain C3-41).